The chain runs to 209 residues: MSSREKEQTIALSAIFQAAELVSILAKTGQVDNASLQPLLESLLMVNAASTEDIYGGQWDYSTNLALGRKISRQALGKERSSVNPDTLRYALSLIHLENKLSKTPEMLSTIGQKIAQIEQKKAHYESVLHENMVASISGMYQDTLSKLSFRIQVHGDSRFLQQPQVANQVRAILMSGIRAAMLWRQLGGKRWHLIFKRKALLSALESRN.

Belongs to the HflD family.

It localises to the cytoplasm. The protein localises to the cell inner membrane. This is High frequency lysogenization protein HflD homolog from Marinomonas sp. (strain MWYL1).